Here is a 465-residue protein sequence, read N- to C-terminus: Lysosomal dipeptide transporter MFSD1 (465 aa).

The segment at 1–23 (MEEEDEEARALLAGGPDEADRGA) is disordered. The Dileucine internalization motif signature appears at 11-12 (LL). 12 helical membrane-spanning segments follow: residues 39 to 59 (LVHR…SYFC), 83 to 103 (LLYA…GFLI), 113 to 133 (TIIF…GGIF), 135 to 155 (AFWL…SLAV), 170 to 191 (LNLV…NMNL), 213 to 233 (ITLM…LALA), 266 to 286 (LWLI…FIGL), 304 to 324 (AINS…GLLV), 331 to 351 (IIWV…LAFT), 361 to 381 (LLGL…AFVV), 392 to 412 (FMQS…GMIL), and 418 to 438 (LFLE…VVLL).

Belongs to the major facilitator superfamily. In terms of assembly, homodimer. Interacts with lysosomal protein GLMP (via lumenal domain); the interaction starts while both proteins are still in the endoplasmic reticulum and is required for stabilization of MFSD1 in lysosomes but has no direct effect on its targeting to lysosomes or transporter activity.

It localises to the lysosome membrane. It carries out the reaction L-alpha-aminoacyl-L-arginine(out) = L-alpha-aminoacyl-L-arginine(in). It catalyses the reaction L-arginyl-L-alpha-amino acid(out) = L-arginyl-L-alpha-amino acid(in). The catalysed reaction is L-arginyl-glycine(out) = L-arginyl-glycine(in). The enzyme catalyses L-alpha-aminoacyl-L-lysine(out) = L-alpha-aminoacyl-L-lysine(in). It carries out the reaction L-aspartyl-L-lysine(out) = L-aspartyl-L-lysine(in). It catalyses the reaction L-alanyl-L-lysine(out) = L-alanyl-L-lysine(in). The catalysed reaction is L-lysyl-L-alpha-amino acid(out) = L-lysyl-L-alpha-amino acid(in). The enzyme catalyses L-lysyl-L-alanine(out) = L-lysyl-L-alanine(in). It carries out the reaction L-lysyl-L-lysine(out) = L-lysyl-L-lysine(in). It catalyses the reaction L-lysyl-glycine(out) = L-lysyl-glycine(in). The catalysed reaction is L-alpha-aminoacyl-L-histidine(out) = L-alpha-aminoacyl-L-histidine(in). The enzyme catalyses L-histidyl-L-alpha-amino acid(out) = L-histidyl-L-alpha-amino acid(in). It carries out the reaction L-histidyl-glycine(out) = L-histidyl-glycine(in). Its function is as follows. Lysosomal dipeptide uniporter that selectively exports lysine, arginine or histidine-containing dipeptides with a net positive charge from the lysosome lumen into the cytosol. Could play a role in a specific type of protein O-glycosylation indirectly regulating macrophages migration and tissue invasion. Also essential for liver homeostasis. This Pongo abelii (Sumatran orangutan) protein is Lysosomal dipeptide transporter MFSD1.